The sequence spans 392 residues: tRNA-specific 2-thiouridylase MnmA (392 aa).

Residues 18–25 (AMSGGVDS) and Leu-44 each bind ATP. The active-site Nucleophile is the Cys-112. The cysteines at positions 112 and 208 are disulfide-linked. Residue Gly-136 coordinates ATP. The interval 158-160 (RDQ) is interaction with tRNA. Cys-208 (cysteine persulfide intermediate) is an active-site residue.

Belongs to the MnmA/TRMU family.

The protein localises to the cytoplasm. The enzyme catalyses S-sulfanyl-L-cysteinyl-[protein] + uridine(34) in tRNA + AH2 + ATP = 2-thiouridine(34) in tRNA + L-cysteinyl-[protein] + A + AMP + diphosphate + H(+). Its function is as follows. Catalyzes the 2-thiolation of uridine at the wobble position (U34) of tRNA, leading to the formation of s(2)U34. The chain is tRNA-specific 2-thiouridylase MnmA from Rhodospirillum centenum (strain ATCC 51521 / SW).